A 205-amino-acid polypeptide reads, in one-letter code: Ribosomal RNA small subunit methyltransferase G (205 aa).

S-adenosyl-L-methionine-binding positions include Gly-76, Leu-81, 127–128, and Arg-140; that span reads IE.

Belongs to the methyltransferase superfamily. RNA methyltransferase RsmG family.

Its subcellular location is the cytoplasm. It catalyses the reaction guanosine(527) in 16S rRNA + S-adenosyl-L-methionine = N(7)-methylguanosine(527) in 16S rRNA + S-adenosyl-L-homocysteine. Functionally, specifically methylates the N7 position of guanine in position 527 of 16S rRNA. The protein is Ribosomal RNA small subunit methyltransferase G of Francisella tularensis subsp. holarctica (strain FTNF002-00 / FTA).